The primary structure comprises 728 residues: 1,4-alpha-glucan branching enzyme GlgB (728 aa).

Residue Asp-405 is the Nucleophile of the active site. The active-site Proton donor is the Glu-458. Positions 686–712 are disordered; it reads YHGSNAGNAGAVQSDEHESHGRPHSLS.

It belongs to the glycosyl hydrolase 13 family. GlgB subfamily. As to quaternary structure, monomer.

It catalyses the reaction Transfers a segment of a (1-&gt;4)-alpha-D-glucan chain to a primary hydroxy group in a similar glucan chain.. It functions in the pathway glycan biosynthesis; glycogen biosynthesis. Its function is as follows. Catalyzes the formation of the alpha-1,6-glucosidic linkages in glycogen by scission of a 1,4-alpha-linked oligosaccharide from growing alpha-1,4-glucan chains and the subsequent attachment of the oligosaccharide to the alpha-1,6 position. The sequence is that of 1,4-alpha-glucan branching enzyme GlgB from Enterobacter sp. (strain 638).